A 218-amino-acid polypeptide reads, in one-letter code: 3-phospho-D-glycerate guanylyltransferase (218 aa).

The protein belongs to the CofC family.

It carries out the reaction (2R)-3-phosphoglycerate + GTP + H(+) = 3-[(R)-glyceryl]-diphospho-5'-guanosine + diphosphate. It functions in the pathway cofactor biosynthesis; coenzyme F420 biosynthesis. In terms of biological role, guanylyltransferase that catalyzes the activation of (2R)-3-phosphoglycerate (3PG) as 3-[(R)-glyceryl]-diphospho-5'-guanosine, via the condensation of 3PG with GTP. It is involved in the biosynthesis of a derivative of the hydride carrier cofactor coenzyme F420, 3PG-F420. This Phenylobacterium zucineum (strain HLK1) protein is 3-phospho-D-glycerate guanylyltransferase.